We begin with the raw amino-acid sequence, 620 residues long: mRNA cap guanine-N(7) methyltransferase (620 aa).

2 disordered regions span residues 1–176 and 193–304; these read MLPP…APSS and AHAN…DDEY. Over residues 29-44 the composition is skewed to polar residues; that stretch reads RSPSMSLSPRSQNQSL. 2 stretches are compositionally biased toward low complexity: residues 45 to 60 and 136 to 157; these read PYPSSRPGSAAGSAHP and PQPTTTPSSPSTSQHTPYTPHH. Residues 345–620 enclose the mRNA cap 0 methyltransferase domain; sequence SPIIGLKKFN…LYMGFAFEKM (276 aa). 354–355 provides a ligand contact to mRNA; it reads NN. Lys358, Gly377, Asp399, Asp428, Gln454, and Tyr459 together coordinate S-adenosyl-L-methionine.

Belongs to the class I-like SAM-binding methyltransferase superfamily. mRNA cap 0 methyltransferase family.

It is found in the nucleus. It carries out the reaction a 5'-end (5'-triphosphoguanosine)-ribonucleoside in mRNA + S-adenosyl-L-methionine = a 5'-end (N(7)-methyl 5'-triphosphoguanosine)-ribonucleoside in mRNA + S-adenosyl-L-homocysteine. Responsible for methylating the 5'-cap structure of mRNAs. The polypeptide is mRNA cap guanine-N(7) methyltransferase (ABD1) (Cryptococcus neoformans var. neoformans serotype D (strain JEC21 / ATCC MYA-565) (Filobasidiella neoformans)).